Consider the following 167-residue polypeptide: Putative 4-hydroxy-4-methyl-2-oxoglutarate aldolase (167 aa).

Residues 81 to 84 and R103 each bind substrate; that span reads GDII. D104 contacts a divalent metal cation.

The protein belongs to the class II aldolase/RraA-like family. In terms of assembly, homotrimer. It depends on a divalent metal cation as a cofactor.

It carries out the reaction 4-hydroxy-4-methyl-2-oxoglutarate = 2 pyruvate. The enzyme catalyses oxaloacetate + H(+) = pyruvate + CO2. Catalyzes the aldol cleavage of 4-hydroxy-4-methyl-2-oxoglutarate (HMG) into 2 molecules of pyruvate. Also contains a secondary oxaloacetate (OAA) decarboxylase activity due to the common pyruvate enolate transition state formed following C-C bond cleavage in the retro-aldol and decarboxylation reactions. The sequence is that of Putative 4-hydroxy-4-methyl-2-oxoglutarate aldolase from Corynebacterium jeikeium (strain K411).